We begin with the raw amino-acid sequence, 189 residues long: Inner membrane-spanning protein YciB (189 aa).

5 helical membrane passes run 4-24, 53-73, 76-96, 121-141, and 149-169; these read FFEF…DIYI, ITFG…DDVF, WKVT…QFFY, MAWA…AFSL, and FKVF…GLYI.

The protein belongs to the YciB family.

It localises to the cell inner membrane. In terms of biological role, plays a role in cell envelope biogenesis, maintenance of cell envelope integrity and membrane homeostasis. The sequence is that of Inner membrane-spanning protein YciB from Psychromonas ingrahamii (strain DSM 17664 / CCUG 51855 / 37).